A 1042-amino-acid polypeptide reads, in one-letter code: Probable inorganic carbon transporter subunit DabA (1042 aa).

Positions 462, 464, 721, and 736 each coordinate Zn(2+).

It belongs to the inorganic carbon transporter (TC 9.A.2) DabA family. In terms of assembly, forms a complex with DabB. Zn(2+) is required as a cofactor.

It is found in the cell inner membrane. Its function is as follows. Part of an energy-coupled inorganic carbon pump. This is Probable inorganic carbon transporter subunit DabA from Nitrosomonas eutropha (strain DSM 101675 / C91 / Nm57).